A 713-amino-acid polypeptide reads, in one-letter code: NAD(+) hydrolase SARM1 (713 aa).

One copy of the ARM 1 repeat lies at 53 to 96 (DVQAVLDGSLPALRSAIRTLRSSKDTGDLEETRRAIAETFQLVE). NAD(+) is bound by residues tryptophan 99, arginine 106, 145 to 153 (EQILVSENR), and 186 to 189 (HMFK). 7 ARM repeats span residues 110-149 (EEIC…QILV), 151-189 (ENRD…HMFK), 192-231 (EETS…NCAM), 233-276 (GGHR…LAAN), 277-310 (REME…NMLD), 311-350 (SADS…VETS), and 355-398 (QRNT…EEVP). SAM domains are found at residues 408–472 (WKSG…LKTY) and 478–537 (CDPN…ILSA). Positions 552-695 (KGPDVFISYR…KILRFLEGCP (144 aa)) constitute a TIR domain. NAD(+)-binding positions include 561–562 (RR) and glutamate 591. The active site involves glutamate 634.

It belongs to the SARM1 family. Homooctamer; forms an octameric ring via SAM domains.

The protein localises to the cytoplasm. It is found in the cell projection. It localises to the axon. Its subcellular location is the dendrite. The protein resides in the synapse. The protein localises to the mitochondrion. The enzyme catalyses NAD(+) + H2O = ADP-D-ribose + nicotinamide + H(+). It carries out the reaction NAD(+) = cyclic ADP-beta-D-ribose + nicotinamide + H(+). The catalysed reaction is NADP(+) + H2O = ADP-D-ribose 2'-phosphate + nicotinamide + H(+). With respect to regulation, autoinhibited: in the inactive state, the enzymatic TIR domain is held apart by the autoinhibiting ARM repeats. NAD(+)-binding to ARM repeats maintains an inactive state by promoting interaction between ARM repeats and the TIR domain, thereby facilitating inhibition of the enzymatic TIR domain. Following activation, possibly by nicotinamide mononucleotide (NMN), auto-inhibitory interactions are released, allowing self-association of the TIR domains and subsequent activation of the NAD(+) hydrolase (NADase) activity. Self-association of TIR domains is facilitated by the octamer of SAM domains. NAD(+) hydrolase, which plays a key role in axonal degeneration following injury by regulating NAD(+) metabolism. Acts as a negative regulator of MYD88- and TRIF-dependent toll-like receptor signaling pathway by promoting Wallerian degeneration, an injury-induced form of programmed subcellular death which involves degeneration of an axon distal to the injury site. Wallerian degeneration is triggerred by NAD(+) depletion: in response to injury, SARM1 is activated and catalyzes cleavage of NAD(+) into ADP-D-ribose (ADPR), cyclic ADPR (cADPR) and nicotinamide; NAD(+) cleavage promoting cytoskeletal degradation and axon destruction. Also able to hydrolyze NADP(+), but not other NAD(+)-related molecules. Can activate neuronal cell death in response to stress. This Danio rerio (Zebrafish) protein is NAD(+) hydrolase SARM1.